Here is a 93-residue protein sequence, read N- to C-terminus: Precursor of CEP13 (93 aa).

Positions 1 to 27 are cleaved as a signal peptide; that stretch reads MARPRISISMICLLILIVGFVLQSSQA. Residues 28–78 constitute a propeptide that is removed on maturation; it reads RKVLVPYGTSKGLFLSALPKGNVPPSGPSDKGHTSPPDDTDQRMVPENSPE. The tract at residues 45 to 93 is disordered; sequence LPKGNVPPSGPSDKGHTSPPDDTDQRMVPENSPEIYRRLESVPSPGVGH. Hydroxyproline occurs at positions 87 and 89.

It belongs to the C-terminally encoded plant signaling peptide (CEP) family. Interacts with CEP receptors (e.g. CEPR1 and CEPR2). In terms of processing, the mature small signaling peptide is generated by proteolytic processing of the longer precursor.

It localises to the secreted. It is found in the extracellular space. Its subcellular location is the apoplast. In terms of biological role, extracellular signaling peptide that may regulate primary root growth rate and systemic nitrogen (N)-demand signaling. The polypeptide is Precursor of CEP13 (Arabidopsis thaliana (Mouse-ear cress)).